A 400-amino-acid chain; its full sequence is Keratin, type I cytoskeletal 19 (400 aa).

The segment at 1-79 is head; that stretch reads MTSYSYRQSS…TASDGLLAGN (79 aa). Position 7 is an omega-N-methylarginine (Arg7). Phosphoserine is present on residues Ser14 and Ser22. Asymmetric dimethylarginine; alternate is present on Arg24. Residue Arg24 is modified to Omega-N-methylarginine; alternate. Arg32 bears the Omega-N-methylarginine mark. Phosphoserine occurs at positions 35 and 40. Arg43 and Arg51 each carry omega-N-methylarginine. A phosphoserine mark is found at Ser57 and Ser72. The segment at 80-115 is coil 1A; sequence EKLTMQNLNDRLASYLDKVRALEAANGELEVKIRDW. One can recognise an IF rod domain in the interval 80-391; the sequence is EKLTMQNLND…SLLEGQEDHY (312 aa). A linker 1 region spans residues 116-133; the sequence is YQKQGPGPSRDYSHYYTT. Residues 134–225 are coil 1B; sequence IQDLRDKILG…KNHEEEISTL (92 aa). The interval 226–248 is linker 12; the sequence is RGQVGGQVSVEVDSAPGTDLAKI. Residues 244–390 are necessary for interaction with PNN; sequence DLAKILSDMR…RSLLEGQEDH (147 aa). Positions 249-387 are coil 2; that stretch reads LSDMRSQYEV…ATYRSLLEGQ (139 aa). Thr323 is subject to Phosphothreonine. Positions 388–400 are rod-like helical tail; sequence EDHYNNLSASKVL. Residue Tyr391 is modified to Phosphotyrosine. 2 positions are modified to phosphoserine: Ser395 and Ser397.

Belongs to the intermediate filament family. Heterotetramer of two type I and two type II keratins. Interacts with PNN and the actin-binding domain of DMD. Interacts with HCV core protein. As to quaternary structure, (Microbial infection) Interacts with hepatitis C virus/HCV core protein. As to expression, expressed in a defined zone of basal keratinocytes in the deep outer root sheath of hair follicles. Also observed in sweat gland and mammary gland ductal and secretory cells, bile ducts, gastrointestinal tract, bladder urothelium, oral epithelia, esophagus, ectocervical epithelium (at protein level). Expressed in epidermal basal cells, in nipple epidermis and a defined region of the hair follicle. Also seen in a subset of vascular wall cells in both the veins and artery of human umbilical cord, and in umbilical cord vascular smooth muscle. Observed in muscle fibers accumulating in the costameres of myoplasm at the sarcolemma in structures that contain dystrophin and spectrin.

In terms of biological role, involved in the organization of myofibers. Together with KRT8, helps to link the contractile apparatus to dystrophin at the costameres of striated muscle. This is Keratin, type I cytoskeletal 19 (KRT19) from Homo sapiens (Human).